The primary structure comprises 337 residues: Glyceraldehyde-3-phosphate dehydrogenase 2, cytosolic (337 aa).

Residues 1 to 151 (MGKIKIGING…YTSDVNIVSN (151 aa)) form a binding to NAD region. NAD(+) is bound by residues 13–14 (RI), D35, and R82. A catalytic region spans residues 152–337 (ASCTTNCLAP…DLIRHMFKTQ (186 aa)). Residues 153–155 (SCT), T184, 213–214 (TG), and R236 each bind D-glyceraldehyde 3-phosphate. The active-site Nucleophile is the C154. Residue N318 coordinates NAD(+).

The protein belongs to the glyceraldehyde-3-phosphate dehydrogenase family. As to quaternary structure, homotetramer. Developing seeds, seedling roots and shoots, and embryo.

It is found in the cytoplasm. It carries out the reaction D-glyceraldehyde 3-phosphate + phosphate + NAD(+) = (2R)-3-phospho-glyceroyl phosphate + NADH + H(+). It participates in carbohydrate degradation; glycolysis; pyruvate from D-glyceraldehyde 3-phosphate: step 1/5. Its function is as follows. Key enzyme in glycolysis that catalyzes the first step of the pathway by converting D-glyceraldehyde 3-phosphate (G3P) into 3-phospho-D-glyceroyl phosphate. Essential for the maintenance of cellular ATP levels and carbohydrate metabolism. The polypeptide is Glyceraldehyde-3-phosphate dehydrogenase 2, cytosolic (GAPC2) (Zea mays (Maize)).